The primary structure comprises 380 residues: Beta sliding clamp (380 aa).

It belongs to the beta sliding clamp family. As to quaternary structure, forms a ring-shaped head-to-tail homodimer around DNA which binds and tethers DNA polymerases and other proteins to the DNA. The DNA replisome complex has a single clamp-loading complex (3 tau and 1 each of delta, delta', psi and chi subunits) which binds 3 Pol III cores (1 core on the leading strand and 2 on the lagging strand) each with a beta sliding clamp dimer. Additional proteins in the replisome are other copies of gamma, psi and chi, Ssb, DNA helicase and RNA primase.

It localises to the cytoplasm. Confers DNA tethering and processivity to DNA polymerases and other proteins. Acts as a clamp, forming a ring around DNA (a reaction catalyzed by the clamp-loading complex) which diffuses in an ATP-independent manner freely and bidirectionally along dsDNA. Initially characterized for its ability to contact the catalytic subunit of DNA polymerase III (Pol III), a complex, multichain enzyme responsible for most of the replicative synthesis in bacteria; Pol III exhibits 3'-5' exonuclease proofreading activity. The beta chain is required for initiation of replication as well as for processivity of DNA replication. The protein is Beta sliding clamp (dnaN) of Lactococcus lactis subsp. lactis (strain IL1403) (Streptococcus lactis).